The sequence spans 737 residues: Catalase-peroxidase (737 aa).

A cross-link (tryptophyl-tyrosyl-methioninium (Trp-Tyr) (with M-245)) is located at residues 89 to 219 (WHSAGTYRVF…LAASHMGLIY (131 aa)). His-90 (proton acceptor) is an active-site residue. A cross-link (tryptophyl-tyrosyl-methioninium (Tyr-Met) (with W-89)) is located at residues 219–245 (YVNPEGPNGNPDPKAAARDIRVTFGRM). Position 260 (His-260) interacts with heme b.

The protein belongs to the peroxidase family. Peroxidase/catalase subfamily. Homodimer or homotetramer. Heme b serves as cofactor. Post-translationally, formation of the three residue Trp-Tyr-Met cross-link is important for the catalase, but not the peroxidase activity of the enzyme.

The protein resides in the cytoplasm. It catalyses the reaction H2O2 + AH2 = A + 2 H2O. The catalysed reaction is 2 H2O2 = O2 + 2 H2O. Its function is as follows. Bifunctional enzyme with both catalase and broad-spectrum peroxidase activity. This Aspergillus terreus (strain NIH 2624 / FGSC A1156) protein is Catalase-peroxidase.